The chain runs to 393 residues: DNA primase small subunit PriS (393 aa).

Active-site residues include Asp-100, Asp-102, and Asp-296.

This sequence belongs to the eukaryotic-type primase small subunit family. Heterodimer of a small subunit (PriS) and a large subunit (PriL). Mg(2+) serves as cofactor. Mn(2+) is required as a cofactor.

Catalytic subunit of DNA primase, an RNA polymerase that catalyzes the synthesis of short RNA molecules used as primers for DNA polymerase during DNA replication. The small subunit contains the primase catalytic core and has DNA synthesis activity on its own. Binding to the large subunit stabilizes and modulates the activity, increasing the rate of DNA synthesis while decreasing the length of the DNA fragments, and conferring RNA synthesis capability. The DNA polymerase activity may enable DNA primase to also catalyze primer extension after primer synthesis. May also play a role in DNA repair. This chain is DNA primase small subunit PriS, found in Natronomonas pharaonis (strain ATCC 35678 / DSM 2160 / CIP 103997 / JCM 8858 / NBRC 14720 / NCIMB 2260 / Gabara) (Halobacterium pharaonis).